A 172-amino-acid polypeptide reads, in one-letter code: Ribosome maturation factor RimM (172 aa).

The 73-residue stretch at 96–168 (DGEFYYHEII…RVDVELLEGL (73 aa)) folds into the PRC barrel domain.

It belongs to the RimM family. Binds ribosomal protein uS19.

The protein localises to the cytoplasm. In terms of biological role, an accessory protein needed during the final step in the assembly of 30S ribosomal subunit, possibly for assembly of the head region. Essential for efficient processing of 16S rRNA. May be needed both before and after RbfA during the maturation of 16S rRNA. It has affinity for free ribosomal 30S subunits but not for 70S ribosomes. This is Ribosome maturation factor RimM from Streptococcus suis (strain 05ZYH33).